The sequence spans 232 residues: uncharacterized protein (232 aa).

A disordered region spans residues 1–71; it reads MSNPTIEGDE…KENERIKNDD (71 aa). Acidic residues predominate over residues 25-38; that stretch reads DDLDDLDDILDDLD. The span at 44-71 shows a compositional bias: basic and acidic residues; the sequence is KNEEKKNIDEHKQTGNTSKENERIKNDD.

This is an uncharacterized protein from Schizosaccharomyces pombe (strain 972 / ATCC 24843) (Fission yeast).